The sequence spans 36 residues: Mu-agatoxin-Aa1a (36 aa).

Cystine bridges form between C2-C17, C9-C22, C16-C32, and C24-C30. N36 carries the asparagine amide modification.

The protein belongs to the neurotoxin 07 (Beta/delta-agtx) family. 04 (aga-5) subfamily. In terms of tissue distribution, expressed by the venom gland.

Its subcellular location is the secreted. In terms of biological role, insecticidal neurotoxin that induces an irreversible spastic paralysis when injected into insects. Modifies presynaptic voltage-gated sodium channels (Nav), causing them to open at the normal resting potential of the nerve. This leads to spontaneous release of neurotransmitter and repetitive action potentials in motor neurons. In Agelenopsis aperta (North American funnel-web spider), this protein is Mu-agatoxin-Aa1a.